A 745-amino-acid chain; its full sequence is Isocitrate dehydrogenase [NADP] 2 (745 aa).

2 residues coordinate NADP(+): asparagine 87 and serine 89. Positions 134, 137, 141, 147, and 257 each coordinate D-threo-isocitrate. Residue aspartate 352 coordinates Mg(2+). D-threo-isocitrate-binding residues include tyrosine 422 and arginine 550. Aspartate 551 and aspartate 555 together coordinate Mg(2+). NADP(+)-binding residues include glycine 587, serine 588, alanine 589, histidine 592, arginine 603, aspartate 605, and arginine 652.

It belongs to the monomeric-type IDH family. As to quaternary structure, may form homotrimers. Also forms homotetramers at low salt concentration, which are dissociated into homodimers, but not into monomers, at high salt concentration (1 M). Requires Mg(2+) as cofactor.

It catalyses the reaction D-threo-isocitrate + NADP(+) = 2-oxoglutarate + CO2 + NADPH. Functionally, catalyzes the oxidative decarboxylation of isocitrate to 2-oxoglutarate and carbon dioxide with the concomitant reduction of NADP(+). Cannot use NAD(+). The sequence is that of Isocitrate dehydrogenase [NADP] 2 from Mycobacterium tuberculosis (strain ATCC 25618 / H37Rv).